The chain runs to 216 residues: LexA repressor (216 aa).

Positions 28–48 (RAEIAAELGFSSANSAEEHLR) form a DNA-binding region, H-T-H motif. Active-site for autocatalytic cleavage activity residues include S134 and K171.

This sequence belongs to the peptidase S24 family. Homodimer.

The catalysed reaction is Hydrolysis of Ala-|-Gly bond in repressor LexA.. Functionally, represses a number of genes involved in the response to DNA damage (SOS response), including recA and lexA. In the presence of single-stranded DNA, RecA interacts with LexA causing an autocatalytic cleavage which disrupts the DNA-binding part of LexA, leading to derepression of the SOS regulon and eventually DNA repair. This is LexA repressor from Paraburkholderia xenovorans (strain LB400).